We begin with the raw amino-acid sequence, 500 residues long: Probable cytosol aminopeptidase (500 aa).

Lys265 and Asp270 together coordinate Mn(2+). Residue Lys277 is part of the active site. Asp288, Asp347, and Glu349 together coordinate Mn(2+). Arg351 is a catalytic residue.

This sequence belongs to the peptidase M17 family. Requires Mn(2+) as cofactor.

The protein localises to the cytoplasm. It catalyses the reaction Release of an N-terminal amino acid, Xaa-|-Yaa-, in which Xaa is preferably Leu, but may be other amino acids including Pro although not Arg or Lys, and Yaa may be Pro. Amino acid amides and methyl esters are also readily hydrolyzed, but rates on arylamides are exceedingly low.. The catalysed reaction is Release of an N-terminal amino acid, preferentially leucine, but not glutamic or aspartic acids.. Presumably involved in the processing and regular turnover of intracellular proteins. Catalyzes the removal of unsubstituted N-terminal amino acids from various peptides. This is Probable cytosol aminopeptidase from Rickettsia rickettsii (strain Iowa).